Consider the following 602-residue polypeptide: Elongation factor 4 (602 aa).

The region spanning 7–189 is the tr-type G domain; that stretch reads SRLRNFCIIA…AVVERVPPPK (183 aa). Residues 19-24 and 136-139 each bind GTP; these read DHGKST and NKVD.

The protein belongs to the TRAFAC class translation factor GTPase superfamily. Classic translation factor GTPase family. LepA subfamily.

The protein localises to the cell inner membrane. It carries out the reaction GTP + H2O = GDP + phosphate + H(+). Its function is as follows. Required for accurate and efficient protein synthesis under certain stress conditions. May act as a fidelity factor of the translation reaction, by catalyzing a one-codon backward translocation of tRNAs on improperly translocated ribosomes. Back-translocation proceeds from a post-translocation (POST) complex to a pre-translocation (PRE) complex, thus giving elongation factor G a second chance to translocate the tRNAs correctly. Binds to ribosomes in a GTP-dependent manner. This is Elongation factor 4 from Prochlorococcus marinus (strain MIT 9211).